The primary structure comprises 827 residues: DNA ligase (827 aa).

Residues 45-49, 94-95, and Glu128 contribute to the NAD(+) site; these read DAAYD and SL. Lys130 functions as the N6-AMP-lysine intermediate in the catalytic mechanism. Positions 151, 188, 304, and 328 each coordinate NAD(+). Cys451, Cys454, Cys475, and Cys481 together coordinate Zn(2+). Positions 748-827 constitute a BRCT domain; sequence AAAAAFSGRT…AEWLAMVEAA (80 aa).

The protein belongs to the NAD-dependent DNA ligase family. LigA subfamily. Requires Mg(2+) as cofactor. Mn(2+) serves as cofactor.

It carries out the reaction NAD(+) + (deoxyribonucleotide)n-3'-hydroxyl + 5'-phospho-(deoxyribonucleotide)m = (deoxyribonucleotide)n+m + AMP + beta-nicotinamide D-nucleotide.. In terms of biological role, DNA ligase that catalyzes the formation of phosphodiester linkages between 5'-phosphoryl and 3'-hydroxyl groups in double-stranded DNA using NAD as a coenzyme and as the energy source for the reaction. It is essential for DNA replication and repair of damaged DNA. The protein is DNA ligase of Methylobacterium sp. (strain 4-46).